The following is a 341-amino-acid chain: Protein pelota homolog (341 aa).

Belongs to the eukaryotic release factor 1 family. Pelota subfamily. As to quaternary structure, monomer. Requires a divalent metal cation as cofactor.

It is found in the cytoplasm. In terms of biological role, may function in recognizing stalled ribosomes, interact with stem-loop structures in stalled mRNA molecules, and effect endonucleolytic cleavage of the mRNA. May play a role in the release non-functional ribosomes and degradation of damaged mRNAs. Has endoribonuclease activity. This is Protein pelota homolog from Metallosphaera sedula (strain ATCC 51363 / DSM 5348 / JCM 9185 / NBRC 15509 / TH2).